A 151-amino-acid chain; its full sequence is D-ribose pyranase 1 (151 aa).

His20 serves as the catalytic Proton donor. Residues Asp28, His98, and Trp121–Asn123 contribute to the substrate site.

The protein belongs to the RbsD / FucU family. RbsD subfamily. Homodecamer.

The protein resides in the cytoplasm. It catalyses the reaction beta-D-ribopyranose = beta-D-ribofuranose. It functions in the pathway carbohydrate metabolism; D-ribose degradation; D-ribose 5-phosphate from beta-D-ribopyranose: step 1/2. In terms of biological role, catalyzes the interconversion of beta-pyran and beta-furan forms of D-ribose. This chain is D-ribose pyranase 1, found in Streptomyces griseus subsp. griseus (strain JCM 4626 / CBS 651.72 / NBRC 13350 / KCC S-0626 / ISP 5235).